The following is a 583-amino-acid chain: Potassium-transporting ATPase potassium-binding subunit (583 aa).

A run of 10 helical transmembrane segments spans residues Asn3 to Gly23, Met66 to Ala86, Gly135 to Ile155, Val177 to Val197, Leu266 to Ile286, Val293 to Ala313, Gly402 to Gly422, Ala440 to Leu460, Val506 to Met526, and Leu549 to Ala569.

The protein belongs to the KdpA family. The system is composed of three essential subunits: KdpA, KdpB and KdpC.

The protein resides in the cell inner membrane. Functionally, part of the high-affinity ATP-driven potassium transport (or Kdp) system, which catalyzes the hydrolysis of ATP coupled with the electrogenic transport of potassium into the cytoplasm. This subunit binds the periplasmic potassium ions and delivers the ions to the membrane domain of KdpB through an intramembrane tunnel. This is Potassium-transporting ATPase potassium-binding subunit from Desulfovibrio desulfuricans (strain ATCC 27774 / DSM 6949 / MB).